Consider the following 391-residue polypeptide: Carbamoyl phosphate synthase small chain (391 aa).

Residues 1 to 199 (MVRISGFCCA…TWEFIEGPTT (199 aa)) are CPSase. Residues S61, G251, and G253 each coordinate L-glutamine. One can recognise a Glutamine amidotransferase type-1 domain in the interval 203 to 388 (TVVAIDFGVK…VALMRDRQPT (186 aa)). The active-site Nucleophile is C279. L-glutamine-binding residues include L280, Q283, N319, G321, and F322. Active-site residues include H361 and E363.

The protein belongs to the CarA family. Composed of two chains; the small (or glutamine) chain promotes the hydrolysis of glutamine to ammonia, which is used by the large (or ammonia) chain to synthesize carbamoyl phosphate. Tetramer of heterodimers (alpha,beta)4.

It catalyses the reaction hydrogencarbonate + L-glutamine + 2 ATP + H2O = carbamoyl phosphate + L-glutamate + 2 ADP + phosphate + 2 H(+). It carries out the reaction L-glutamine + H2O = L-glutamate + NH4(+). It functions in the pathway amino-acid biosynthesis; L-arginine biosynthesis; carbamoyl phosphate from bicarbonate: step 1/1. The protein operates within pyrimidine metabolism; UMP biosynthesis via de novo pathway; (S)-dihydroorotate from bicarbonate: step 1/3. Small subunit of the glutamine-dependent carbamoyl phosphate synthetase (CPSase). CPSase catalyzes the formation of carbamoyl phosphate from the ammonia moiety of glutamine, carbonate, and phosphate donated by ATP, constituting the first step of 2 biosynthetic pathways, one leading to arginine and/or urea and the other to pyrimidine nucleotides. The small subunit (glutamine amidotransferase) binds and cleaves glutamine to supply the large subunit with the substrate ammonia. The chain is Carbamoyl phosphate synthase small chain from Synechococcus sp. (strain ATCC 27144 / PCC 6301 / SAUG 1402/1) (Anacystis nidulans).